The following is a 293-amino-acid chain: Putative ABC transporter ATP-binding protein AF_0731 (293 aa).

One can recognise an ABC transporter domain in the interval 2 to 236; it reads IEAVDLHFCY…RKLGIRSFSL (235 aa). 34-41 provides a ligand contact to ATP; that stretch reads GRNGAGKT.

It belongs to the ABC transporter superfamily.

The protein localises to the cell membrane. Probably part of an ABC transporter complex. Responsible for energy coupling to the transport system. In Archaeoglobus fulgidus (strain ATCC 49558 / DSM 4304 / JCM 9628 / NBRC 100126 / VC-16), this protein is Putative ABC transporter ATP-binding protein AF_0731.